The primary structure comprises 366 residues: ATPase ASNA1 homolog (366 aa).

Residue 33-40 (KGGVGKTT) coordinates ATP. The active site involves Asp62. Residues Glu234 and Asn261 each coordinate ATP.

Belongs to the arsA ATPase family. In terms of assembly, homodimer.

The protein localises to the cytoplasm. Its subcellular location is the endoplasmic reticulum. In terms of biological role, ATPase required for the post-translational delivery of tail-anchored (TA) proteins to the endoplasmic reticulum. Recognizes and selectively binds the transmembrane domain of TA proteins in the cytosol. This complex then targets to the endoplasmic reticulum by membrane-bound receptors, where the tail-anchored protein is released for insertion. This process is regulated by ATP binding and hydrolysis. ATP binding drives the homodimer towards the closed dimer state, facilitating recognition of newly synthesized TA membrane proteins. ATP hydrolysis is required for insertion. Subsequently, the homodimer reverts towards the open dimer state, lowering its affinity for the membrane-bound receptor, and returning it to the cytosol to initiate a new round of targeting. The sequence is that of ATPase ASNA1 homolog from Cryptosporidium parvum (strain Iowa II).